The following is a 272-amino-acid chain: Alpha-tubulin N-acetyltransferase (272 aa).

The N-acetyltransferase domain maps to 1–186 (MEFRFNCHPL…NNFVVYEGFF (186 aa)). Acetyl-CoA contacts are provided by residues 120–133 (FYVH…GLGR) and 156–165 (SEKLLGFLQK). The interval 216–244 (TTVGEQRRSSSQTRQQVVSPPVVQQPPVG) is disordered. Residues 224–244 (SSSQTRQQVVSPPVVQQPPVG) show a composition bias toward low complexity.

Belongs to the acetyltransferase ATAT1 family.

The enzyme catalyses L-lysyl-[alpha-tubulin] + acetyl-CoA = N(6)-acetyl-L-lysyl-[alpha-tubulin] + CoA + H(+). Its function is as follows. Specifically acetylates 'Lys-40' in alpha-tubulin on the lumenal side of microtubules. Promotes microtubule destabilization and accelerates microtubule dynamics; this activity may be independent of acetylation activity. Acetylates alpha-tubulin with a slow enzymatic rate, due to a catalytic site that is not optimized for acetyl transfer. Enters the microtubule through each end and diffuses quickly throughout the lumen of microtubules. Acetylates only long/old microtubules because of its slow acetylation rate since it does not have time to act on dynamically unstable microtubules before the enzyme is released. This chain is Alpha-tubulin N-acetyltransferase, found in Aedes aegypti (Yellowfever mosquito).